We begin with the raw amino-acid sequence, 359 residues long: Histamine H2 receptor (359 aa).

Over Met-1 to Ser-22 the chain is Extracellular. The N-linked (GlcNAc...) asparagine glycan is linked to Asn-4. A helical transmembrane segment spans residues Val-23–Gly-44. The Cytoplasmic portion of the chain corresponds to Leu-45 to Ile-57. The helical transmembrane segment at Val-58–Ser-81 threads the bilayer. At Cys-82–Asn-92 the chain is on the extracellular side. Cys-91 and Cys-174 are disulfide-bonded. The helical transmembrane segment at Ile-93–Leu-114 threads the bilayer. Topologically, residues Asp-115–Arg-134 are cytoplasmic. Residues Val-135 to Asn-159 form a helical membrane-spanning segment. Topologically, residues Ser-160–Leu-180 are extracellular. Residues Val-181–Arg-204 form a helical membrane-spanning segment. The Cytoplasmic segment spans residues Ile-205–Val-234. Residues Thr-235–Gly-258 form a helical membrane-spanning segment. Topologically, residues Leu-259 to Glu-267 are extracellular. The helical transmembrane segment at Ala-268 to Ala-289 threads the bilayer. The Cytoplasmic portion of the chain corresponds to Thr-290–Arg-359. Cys-305 is lipidated: S-palmitoyl cysteine. The segment covering His-310–Asn-327 has biased composition (polar residues). The interval His-310–Arg-359 is disordered. Residues Gln-328–Leu-340 show a composition bias toward basic and acidic residues.

This sequence belongs to the G-protein coupled receptor 1 family. As to expression, gastric fundus and, to a lesser extent, in brain.

Its subcellular location is the cell membrane. Its function is as follows. The H2 subclass of histamine receptors mediates gastric acid secretion. The activity of this receptor is mediated by G proteins which activate adenylyl cyclase. The polypeptide is Histamine H2 receptor (HRH2) (Canis lupus familiaris (Dog)).